We begin with the raw amino-acid sequence, 60 residues long: Potassium channel toxin alpha-KTx 29.2 (60 aa).

The N-terminal stretch at methionine 1–alanine 28 is a signal peptide. 3 disulfides stabilise this stretch: cysteine 32/cysteine 51, cysteine 40/cysteine 56, and cysteine 44/cysteine 58.

The protein belongs to the short scorpion toxin superfamily. Potassium channel inhibitor family. Alpha-KTx 29 subfamily. As to expression, expressed by the venom gland.

It localises to the secreted. Its function is as follows. Weakly inhibits the Kv1.3/KCNA3 channel (1 uM of thetoxin inhibits currents by 13.2%) and Kv7.1/KCNQ1 channel (10 uM of the toxin inhibits currents by 27.7%). This Lychas mucronatus (Chinese swimming scorpion) protein is Potassium channel toxin alpha-KTx 29.2.